Here is a 409-residue protein sequence, read N- to C-terminus: Peptidase T (409 aa).

His78 lines the Zn(2+) pocket. The active site involves Asp80. Residue Asp139 participates in Zn(2+) binding. Glu173 acts as the Proton acceptor in catalysis. Residues Glu174, Asp196, and His378 each contribute to the Zn(2+) site.

It belongs to the peptidase M20B family. Zn(2+) is required as a cofactor.

Its subcellular location is the cytoplasm. The catalysed reaction is Release of the N-terminal residue from a tripeptide.. Cleaves the N-terminal amino acid of tripeptides. The chain is Peptidase T from Shewanella sediminis (strain HAW-EB3).